The primary structure comprises 358 residues: Peptide chain release factor 1 (358 aa).

Q235 is modified (N5-methylglutamine).

Belongs to the prokaryotic/mitochondrial release factor family. Post-translationally, methylated by PrmC. Methylation increases the termination efficiency of RF1.

It is found in the cytoplasm. Peptide chain release factor 1 directs the termination of translation in response to the peptide chain termination codons UAG and UAA. The protein is Peptide chain release factor 1 of Neisseria gonorrhoeae (strain NCCP11945).